A 438-amino-acid polypeptide reads, in one-letter code: Asparagine--tRNA ligase (438 aa).

The protein belongs to the class-II aminoacyl-tRNA synthetase family. As to quaternary structure, homodimer.

The protein resides in the cytoplasm. It catalyses the reaction tRNA(Asn) + L-asparagine + ATP = L-asparaginyl-tRNA(Asn) + AMP + diphosphate + H(+). The protein is Asparagine--tRNA ligase of Thermus thermophilus (strain ATCC 27634 / DSM 579 / HB8).